A 188-amino-acid chain; its full sequence is Protein-arginine kinase activator protein (188 aa).

4 short sequence motifs (CXXC metal binding motif) span residues 3–6, 29–32, 87–90, and 105–108; these read CENC, CQTC, CPSC, and CANC. The region spanning 145–180 is the UVR domain; it reads KRKIEEKNEYLKKLIEIQDFEEAAIVRDEIKALKAE.

As to quaternary structure, interacts with McsB and CtsR; the CXXC motifs are needed for the binding.

In terms of biological role, activates the phosphorylation activity of the protein-arginine kinase McsB. May function as an important molecule for oxidative tolerance in various types of stress including that of heavy metals. Binds to Cu(2+), Zn(2+), Co(2+) and Cd(2+) via its CXXC metal binding motifs. The sequence is that of Protein-arginine kinase activator protein from Staphylococcus aureus (strain NCTC 8325 / PS 47).